We begin with the raw amino-acid sequence, 681 residues long: Type VI secretion system spike protein VgrG1 (681 aa).

A disordered region spans residues 621 to 640 (NSGGSPSSGSGWGGKSPVDP).

The protein belongs to the VgrG protein family.

Its subcellular location is the secreted. The catalysed reaction is L-arginyl-[protein] + NAD(+) = N(omega)-(ADP-D-ribosyl)-L-arginyl-[protein] + nicotinamide + H(+). Functionally, part of the type VI secretion system specialized secretion system, which delivers several virulence factors in both prokaryotic and eukaryotic cells during infection. Acts directly as an secreted effector with an actin ADP-ribosyltransferase activity that disrupts the host actin cytoskeleton, leading to a decrease in host cell viability and an increase in apoptosis. The sequence is that of Type VI secretion system spike protein VgrG1 (vgrG1) from Aeromonas hydrophila.